The primary structure comprises 369 residues: Probable dual-specificity RNA methyltransferase RlmN (369 aa).

E98 serves as the catalytic Proton acceptor. A Radical SAM core domain is found at 106 to 341 (STSRNTLCIS…VTVRKSRGAD (236 aa)). C113 and C346 are joined by a disulfide. Residues C120, C124, and C127 each coordinate [4Fe-4S] cluster. S-adenosyl-L-methionine is bound by residues 171–172 (GE), S204, 227–229 (SLH), and N303. Catalysis depends on C346, which acts as the S-methylcysteine intermediate.

This sequence belongs to the radical SAM superfamily. RlmN family. The cofactor is [4Fe-4S] cluster.

Its subcellular location is the cytoplasm. It carries out the reaction adenosine(2503) in 23S rRNA + 2 reduced [2Fe-2S]-[ferredoxin] + 2 S-adenosyl-L-methionine = 2-methyladenosine(2503) in 23S rRNA + 5'-deoxyadenosine + L-methionine + 2 oxidized [2Fe-2S]-[ferredoxin] + S-adenosyl-L-homocysteine. The enzyme catalyses adenosine(37) in tRNA + 2 reduced [2Fe-2S]-[ferredoxin] + 2 S-adenosyl-L-methionine = 2-methyladenosine(37) in tRNA + 5'-deoxyadenosine + L-methionine + 2 oxidized [2Fe-2S]-[ferredoxin] + S-adenosyl-L-homocysteine. In terms of biological role, specifically methylates position 2 of adenine 2503 in 23S rRNA and position 2 of adenine 37 in tRNAs. The protein is Probable dual-specificity RNA methyltransferase RlmN of Chloroherpeton thalassium (strain ATCC 35110 / GB-78).